Consider the following 873-residue polypeptide: Protein SEY1 (873 aa).

The tract at residues 1–21 (MVANGHFAGSADGQDSSSYEH) is disordered. The Cytoplasmic segment spans residues 1–749 (MVANGHFAGS…KRSAIGGITQ (749 aa)). In terms of domain architecture, GB1/RHD3-type G spans 49–307 (GFNYHLISVF…IPADGFAVYA (259 aa)). Residue 59 to 66 (GSQSTGKS) coordinates GTP. A coiled-coil region spans residues 482 to 506 (SNYQQELSLYQKDLERTSGQLRRDE). Positions 676-703 (LDKWIGHTPSSATPADEEDLTPIGGVDD) are disordered. Over residues 690–703 (ADEEDLTPIGGVDD) the composition is skewed to acidic residues. The chain crosses the membrane as a helical span at residues 750-770 (VPLYFYGLLFALGWNEILAVL). The Lumenal portion of the chain corresponds to 771–773 (RNP). Residues 774–794 (VYFLLLFVCAIGAYITYQLNL) form a helical membrane-spanning segment. The Cytoplasmic portion of the chain corresponds to 795 to 873 (WGPIIKMTEA…EDVDDDDDDF (79 aa)). Residues 828-873 (RQAMAMSGARNATEEHEMSRLSRKPAERGGRKNRADEDVDDDDDDF) form a disordered region. The segment covering 839 to 863 (ATEEHEMSRLSRKPAERGGRKNRAD) has biased composition (basic and acidic residues). Residues 864-873 (EDVDDDDDDF) show a composition bias toward acidic residues.

The protein belongs to the TRAFAC class dynamin-like GTPase superfamily. GB1/RHD3 GTPase family. RHD3 subfamily.

The protein localises to the endoplasmic reticulum membrane. Functionally, cooperates with the reticulon proteins and tubule-shaping DP1 family proteins to generate and maintain the structure of the tubular endoplasmic reticulum network. Has GTPase activity, which is required for its function in ER organization. The polypeptide is Protein SEY1 (Ajellomyces capsulatus (strain G186AR / H82 / ATCC MYA-2454 / RMSCC 2432) (Darling's disease fungus)).